We begin with the raw amino-acid sequence, 89 residues long: Small ribosomal subunit protein bS20 (89 aa).

The interval 1–28 is disordered; sequence MTLANIKSAKKRAVQSEKRRQHNASQRS.

It belongs to the bacterial ribosomal protein bS20 family.

Binds directly to 16S ribosomal RNA. In Haemophilus ducreyi (strain 35000HP / ATCC 700724), this protein is Small ribosomal subunit protein bS20.